A 114-amino-acid chain; its full sequence is UPF0145 protein PYRAB04900 (114 aa).

Belongs to the UPF0145 family.

The chain is UPF0145 protein PYRAB04900 from Pyrococcus abyssi (strain GE5 / Orsay).